Consider the following 495-residue polypeptide: Bifunctional protein GlmU (495 aa).

Residues 1 to 241 (MTFPGDTAVL…SALVAGVNNR (241 aa)) form a pyrophosphorylase region. UDP-N-acetyl-alpha-D-glucosamine contacts are provided by residues 12-15 (LAAG), Lys26, Gln83, 88-89 (GT), 112-114 (SGD), Gly151, Glu166, Asn181, and Asn239. Residue Asp114 participates in Mg(2+) binding. Residue Asn239 coordinates Mg(2+). Positions 242–262 (VQLAELASELNRRVVAAHQLA) are linker. An N-acetyltransferase region spans residues 263–495 (GVTVVDPATT…TQPPDADQTP (233 aa)). Arg344 and Lys362 together coordinate UDP-N-acetyl-alpha-D-glucosamine. The active-site Proton acceptor is the His374. The UDP-N-acetyl-alpha-D-glucosamine site is built by Tyr377 and Asn388. Acetyl-CoA-binding positions include Ala391, 397-398 (NY), Ser416, and Ala434. Positions 457–495 (IENWVQRKRPGSPAAQASKRASEMACQQPTQPPDADQTP) are disordered. The segment covering 483–495 (QQPTQPPDADQTP) has biased composition (low complexity).

In the N-terminal section; belongs to the N-acetylglucosamine-1-phosphate uridyltransferase family. It in the C-terminal section; belongs to the transferase hexapeptide repeat family. In terms of assembly, homotrimer. It depends on Mg(2+) as a cofactor.

It is found in the cytoplasm. The catalysed reaction is alpha-D-glucosamine 1-phosphate + acetyl-CoA = N-acetyl-alpha-D-glucosamine 1-phosphate + CoA + H(+). The enzyme catalyses N-acetyl-alpha-D-glucosamine 1-phosphate + UTP + H(+) = UDP-N-acetyl-alpha-D-glucosamine + diphosphate. The protein operates within nucleotide-sugar biosynthesis; UDP-N-acetyl-alpha-D-glucosamine biosynthesis; N-acetyl-alpha-D-glucosamine 1-phosphate from alpha-D-glucosamine 6-phosphate (route II): step 2/2. Its pathway is nucleotide-sugar biosynthesis; UDP-N-acetyl-alpha-D-glucosamine biosynthesis; UDP-N-acetyl-alpha-D-glucosamine from N-acetyl-alpha-D-glucosamine 1-phosphate: step 1/1. It functions in the pathway bacterial outer membrane biogenesis; LPS lipid A biosynthesis. Its function is as follows. Catalyzes the last two sequential reactions in the de novo biosynthetic pathway for UDP-N-acetylglucosamine (UDP-GlcNAc). The C-terminal domain catalyzes the transfer of acetyl group from acetyl coenzyme A to glucosamine-1-phosphate (GlcN-1-P) to produce N-acetylglucosamine-1-phosphate (GlcNAc-1-P), which is converted into UDP-GlcNAc by the transfer of uridine 5-monophosphate (from uridine 5-triphosphate), a reaction catalyzed by the N-terminal domain. The polypeptide is Bifunctional protein GlmU (Mycobacterium tuberculosis (strain ATCC 25177 / H37Ra)).